Reading from the N-terminus, the 302-residue chain is Stanniocalcin-2 (302 aa).

A signal peptide spans 1-24 (MCAERLGHFMTLALVLATIDPARG). The disordered stretch occupies residues 23–44 (RGTDATNPPEGPQDRSSQQKGR). N-linked (GlcNAc...) asparagine glycosylation occurs at asparagine 73. The disordered stretch occupies residues 218-302 (PPTAPPERQP…EQSEYSDIRR (85 aa)). Over residues 227 to 264 (PQVDRAKLSRAHHGEAGHHLPEPSSRETGRGAKGERGS) the composition is skewed to basic and acidic residues. Serine 250 and serine 251 each carry phosphoserine. Phosphothreonine is present on threonine 254.

Belongs to the stanniocalcin family. In terms of assembly, homodimer; disulfide-linked.

The protein localises to the secreted. Has an anti-hypocalcemic action on calcium and phosphate homeostasis. The sequence is that of Stanniocalcin-2 (STC2) from Macaca nemestrina (Pig-tailed macaque).